The chain runs to 113 residues: U11-theraphotoxin-Hhn1n (113 aa).

The N-terminal stretch at 1 to 21 is a signal peptide; sequence MNTVRVTFLLVFVLAVSLGQA. Positions 22-74 are excised as a propeptide; the sequence is DKDENRMEMQEKTEQGKSYLDFAENLLLQKLEELEAKLLEEDSEESRNSRQKR. Residues 60 to 69 show a composition bias toward basic and acidic residues; it reads LEEDSEESRN. Residues 60 to 83 form a disordered region; sequence LEEDSEESRNSRQKRCIGEGVPCD. 2 disulfides stabilise this stretch: C75/C90 and C89/C110.

It belongs to the neurotoxin 14 (magi-1) family. 01 (HNTX-16) subfamily. In terms of tissue distribution, expressed by the venom gland.

It is found in the secreted. In terms of biological role, probable ion channel inhibitor. The sequence is that of U11-theraphotoxin-Hhn1n from Cyriopagopus hainanus (Chinese bird spider).